Reading from the N-terminus, the 310-residue chain is Cytosolic Fe-S cluster assembly factor Nubp1 homolog (310 aa).

Residues Cys-8, Cys-22, Cys-25, and Cys-31 each coordinate [4Fe-4S] cluster. Gly-62 to Ser-69 is a binding site for ATP. The [4Fe-4S] cluster site is built by Cys-239 and Cys-242.

It belongs to the Mrp/NBP35 ATP-binding proteins family. NUBP1/NBP35 subfamily. Heterotetramer of 2 Nubp1 and 2 Nubp2 chains. Requires [4Fe-4S] cluster as cofactor.

The protein resides in the cytoplasm. Functionally, component of the cytosolic iron-sulfur (Fe/S) protein assembly (CIA) machinery. Required for maturation of extramitochondrial Fe-S proteins. The Nubp1-Nubp2 heterotetramer forms a Fe-S scaffold complex, mediating the de novo assembly of an Fe-S cluster and its transfer to target apoproteins. The chain is Cytosolic Fe-S cluster assembly factor Nubp1 homolog from Drosophila ananassae (Fruit fly).